Reading from the N-terminus, the 280-residue chain is Large ribosomal subunit protein uL2 (280 aa).

Disordered stretches follow at residues 27–59 (STPEKSLVRPLHGRGGRNAHGRITTRHKGGGHK) and 225–280 (VMNP…KHSR). 2 stretches are compositionally biased toward basic residues: residues 37–59 (LHGRGGRNAHGRITTRHKGGGHK) and 268–280 (IVRRRRTGKKHSR).

The protein belongs to the universal ribosomal protein uL2 family. As to quaternary structure, part of the 50S ribosomal subunit. Forms a bridge to the 30S subunit in the 70S ribosome.

Its function is as follows. One of the primary rRNA binding proteins. Required for association of the 30S and 50S subunits to form the 70S ribosome, for tRNA binding and peptide bond formation. It has been suggested to have peptidyltransferase activity; this is somewhat controversial. Makes several contacts with the 16S rRNA in the 70S ribosome. The sequence is that of Large ribosomal subunit protein uL2 from Mycobacterium bovis (strain ATCC BAA-935 / AF2122/97).